The following is a 207-amino-acid chain: Guanylate kinase (207 aa).

The Guanylate kinase-like domain occupies 5-183 (GTLYIISAPS…ALYELEAIVE (179 aa)). Residue 12-19 (APSGAGKT) participates in ATP binding.

It belongs to the guanylate kinase family.

The protein resides in the cytoplasm. The enzyme catalyses GMP + ATP = GDP + ADP. Its function is as follows. Essential for recycling GMP and indirectly, cGMP. The chain is Guanylate kinase from Alcanivorax borkumensis (strain ATCC 700651 / DSM 11573 / NCIMB 13689 / SK2).